Consider the following 379-residue polypeptide: MSTPAILALADGTIFKGTSIGATGSTTGEVVFNTAMTGYQEILTDPSYAQQLVTLTYPHIGNTGCNEEDTESGRIHKVWANGLIIRDLPLLHSNFRSEQSLAEYLIQHNVVAIADIDTRKLTRILRDKGAQNGCILAGENITEEEALAKARAFGGLNGLDLAKECCDPNGFEWTEGSWELGKGFTQPELKYHVVAYDYGVKTNILRMLADRGCKLTVVPAQTPAEQVLALNPDGVFLSNGPGDPAACDYAIEAVKTIVETTNLPVFGICLGHQILALASGAKTMKMNHGHHGANHPVQNLEQGTVMITSQNHGFAVDESTLPANLKVTHRSLFDGTNQGIHRTDKPAFSFQGHPEASPGPHDCAPLFDHFIELIEAAKK.

The tract at residues 1 to 188 is CPSase; it reads MSTPAILALA…ELGKGFTQPE (188 aa). Residues Ser-47, Gly-240, and Gly-242 each contribute to the L-glutamine site. The 188-residue stretch at 192 to 379 folds into the Glutamine amidotransferase type-1 domain; sequence HVVAYDYGVK…FIELIEAAKK (188 aa). Cys-269 acts as the Nucleophile in catalysis. L-glutamine contacts are provided by Leu-270, Gln-273, Asn-311, Gly-313, and Phe-314. Active-site residues include His-353 and Glu-355.

Belongs to the CarA family. Composed of two chains; the small (or glutamine) chain promotes the hydrolysis of glutamine to ammonia, which is used by the large (or ammonia) chain to synthesize carbamoyl phosphate. Tetramer of heterodimers (alpha,beta)4.

It catalyses the reaction hydrogencarbonate + L-glutamine + 2 ATP + H2O = carbamoyl phosphate + L-glutamate + 2 ADP + phosphate + 2 H(+). It carries out the reaction L-glutamine + H2O = L-glutamate + NH4(+). It participates in amino-acid biosynthesis; L-arginine biosynthesis; carbamoyl phosphate from bicarbonate: step 1/1. It functions in the pathway pyrimidine metabolism; UMP biosynthesis via de novo pathway; (S)-dihydroorotate from bicarbonate: step 1/3. Its function is as follows. Small subunit of the glutamine-dependent carbamoyl phosphate synthetase (CPSase). CPSase catalyzes the formation of carbamoyl phosphate from the ammonia moiety of glutamine, carbonate, and phosphate donated by ATP, constituting the first step of 2 biosynthetic pathways, one leading to arginine and/or urea and the other to pyrimidine nucleotides. The small subunit (glutamine amidotransferase) binds and cleaves glutamine to supply the large subunit with the substrate ammonia. This Acinetobacter baylyi (strain ATCC 33305 / BD413 / ADP1) protein is Carbamoyl phosphate synthase small chain.